We begin with the raw amino-acid sequence, 353 residues long: MGCGMSTEDKEGKARNEEIENQLKRDKMMQRNEIKMLLLGAGESGKSTILKQMKLIHEGGYSRDERESFKEIIYSNTVQSMRVILEAMESLELPLEDARNEYHVQTIFMQPAQIEGDSLPPEVGNAIGALWRDTGVQECFKRSREYQLNDSAKYYFDAIDRIAQPDYLPTDQDVLRSRVKTTGITETTFIIGDLTYRMFDVGGQRSERKKWIHCFENVTTILFLVAISEYDQLLFEDETVNRMQEALTLFDSICNSRWFVKTSIILFLNKIDRFKEKLPVSPMKNYFPDYEGGADYAAACDYILNRFVSLNQAEQKQIYTHFTCATDTTQIRFVMAAVNDIIIQENLRLCGLI.

The segment at 1–25 (MGCGMSTEDKEGKARNEEIENQLKR) is disordered. A compositionally biased stretch (basic and acidic residues) spans 7–25 (TEDKEGKARNEEIENQLKR). The G-alpha domain maps to 32 to 353 (NEIKMLLLGA…QENLRLCGLI (322 aa)). Positions 35 to 48 (KMLLLGAGESGKST) are G1 motif. Positions 47 and 181 each coordinate a divalent metal cation. The tract at residues 173–181 (DVLRSRVKT) is G2 motif. The tract at residues 196-205 (YRMFDVGGQR) is G3 motif. The tract at residues 265–272 (ILFLNKID) is G4 motif. The G5 motif stretch occupies residues 323-328 (TCATDT).

It belongs to the G-alpha family. G(q) subfamily. G proteins are composed of 3 units; alpha, beta and gamma. The alpha chain contains the guanine nucleotide binding site. Interacts with gprM.

In terms of biological role, G-protein complex alpha subunit that plays a role in conidiation and regulation of the biosynthesis of secondary metabolites such as dihydroxynaphthalene (DHN)-melanin, via interaction with the G protein-coupled receptor gprM. The protein is G-protein complex alpha subunit gpaA of Aspergillus fumigatus (strain CBS 144.89 / FGSC A1163 / CEA10) (Neosartorya fumigata).